The following is a 184-amino-acid chain: Ribosome-recycling factor (184 aa).

It belongs to the RRF family.

Its subcellular location is the cytoplasm. Its function is as follows. Responsible for the release of ribosomes from messenger RNA at the termination of protein biosynthesis. May increase the efficiency of translation by recycling ribosomes from one round of translation to another. The protein is Ribosome-recycling factor of Thermoanaerobacter pseudethanolicus (strain ATCC 33223 / 39E) (Clostridium thermohydrosulfuricum).